We begin with the raw amino-acid sequence, 485 residues long: Pentatricopeptide repeat-containing protein At1g62720 (485 aa).

12 PPR repeats span residues 68 to 102, 103 to 137, 138 to 172, 173 to 207, 208 to 242, 243 to 277, 278 to 312, 313 to 347, 348 to 378, 380 to 414, 415 to 449, and 450 to 484; these read SIVD…GIGH, DLYS…GYEP, DVVT…GFRP, DVVI…GVRA, DAVT…DIVP, NVIT…CVDP, DVFT…GCLP, DVVT…GLVG, DTIT…MDSR, NIRT…EIEL, DITT…GLKP, and DVVS…GLLP.

Belongs to the PPR family. P subfamily.

This chain is Pentatricopeptide repeat-containing protein At1g62720, found in Arabidopsis thaliana (Mouse-ear cress).